The sequence spans 256 residues: Ribonuclease 3-like protein 1 (256 aa).

The 147-residue stretch at 22-168 (AEVERALGGY…IVGAVYLDSK (147 aa)) folds into the RNase III domain. Mg(2+)-binding residues include Glu65, Asp154, and Glu157.

Requires Mg(2+) as cofactor. It depends on Mn(2+) as a cofactor.

In terms of biological role, cleaves double-stranded RNA (dsRNA). The sequence is that of Ribonuclease 3-like protein 1 from Oryza sativa subsp. japonica (Rice).